A 227-amino-acid polypeptide reads, in one-letter code: Small ribosomal subunit protein uS3 (227 aa).

The KH type-2 domain occupies 39-109 (IHRFFEKLTR…KIVINVDAVD (71 aa)).

It belongs to the universal ribosomal protein uS3 family. Part of the 30S ribosomal subunit. Forms a tight complex with proteins S10 and S14.

In terms of biological role, binds the lower part of the 30S subunit head. Binds mRNA in the 70S ribosome, positioning it for translation. The chain is Small ribosomal subunit protein uS3 from Mesomycoplasma hyopneumoniae (strain 232) (Mycoplasma hyopneumoniae).